The primary structure comprises 280 residues: 4-diphosphocytidyl-2-C-methyl-D-erythritol kinase (280 aa).

Lysine 8 is a catalytic residue. 91–101 (PVAAGLAGGST) contributes to the ATP binding site. Aspartate 133 is a catalytic residue.

This sequence belongs to the GHMP kinase family. IspE subfamily.

It catalyses the reaction 4-CDP-2-C-methyl-D-erythritol + ATP = 4-CDP-2-C-methyl-D-erythritol 2-phosphate + ADP + H(+). Its pathway is isoprenoid biosynthesis; isopentenyl diphosphate biosynthesis via DXP pathway; isopentenyl diphosphate from 1-deoxy-D-xylulose 5-phosphate: step 3/6. In terms of biological role, catalyzes the phosphorylation of the position 2 hydroxy group of 4-diphosphocytidyl-2C-methyl-D-erythritol. The protein is 4-diphosphocytidyl-2-C-methyl-D-erythritol kinase of Clostridium botulinum (strain Loch Maree / Type A3).